Consider the following 315-residue polypeptide: 4-hydroxy-3-methylbut-2-enyl diphosphate reductase (315 aa).

Cys12 contributes to the [4Fe-4S] cluster binding site. Positions 40 and 74 each coordinate (2E)-4-hydroxy-3-methylbut-2-enyl diphosphate. The dimethylallyl diphosphate site is built by His40 and His74. The isopentenyl diphosphate site is built by His40 and His74. [4Fe-4S] cluster is bound at residue Cys96. His124 is a (2E)-4-hydroxy-3-methylbut-2-enyl diphosphate binding site. Position 124 (His124) interacts with dimethylallyl diphosphate. His124 contributes to the isopentenyl diphosphate binding site. Glu126 (proton donor) is an active-site residue. Residue Thr167 participates in (2E)-4-hydroxy-3-methylbut-2-enyl diphosphate binding. Cys213 lines the [4Fe-4S] cluster pocket. Residues Ser241, Ser242, Asn243, and Ser290 each contribute to the (2E)-4-hydroxy-3-methylbut-2-enyl diphosphate site. Ser241, Ser242, Asn243, and Ser290 together coordinate dimethylallyl diphosphate. Isopentenyl diphosphate-binding residues include Ser241, Ser242, Asn243, and Ser290.

This sequence belongs to the IspH family. It depends on [4Fe-4S] cluster as a cofactor.

The enzyme catalyses isopentenyl diphosphate + 2 oxidized [2Fe-2S]-[ferredoxin] + H2O = (2E)-4-hydroxy-3-methylbut-2-enyl diphosphate + 2 reduced [2Fe-2S]-[ferredoxin] + 2 H(+). It catalyses the reaction dimethylallyl diphosphate + 2 oxidized [2Fe-2S]-[ferredoxin] + H2O = (2E)-4-hydroxy-3-methylbut-2-enyl diphosphate + 2 reduced [2Fe-2S]-[ferredoxin] + 2 H(+). The protein operates within isoprenoid biosynthesis; dimethylallyl diphosphate biosynthesis; dimethylallyl diphosphate from (2E)-4-hydroxy-3-methylbutenyl diphosphate: step 1/1. It participates in isoprenoid biosynthesis; isopentenyl diphosphate biosynthesis via DXP pathway; isopentenyl diphosphate from 1-deoxy-D-xylulose 5-phosphate: step 6/6. In terms of biological role, catalyzes the conversion of 1-hydroxy-2-methyl-2-(E)-butenyl 4-diphosphate (HMBPP) into a mixture of isopentenyl diphosphate (IPP) and dimethylallyl diphosphate (DMAPP). Acts in the terminal step of the DOXP/MEP pathway for isoprenoid precursor biosynthesis. This is 4-hydroxy-3-methylbut-2-enyl diphosphate reductase from Chloroherpeton thalassium (strain ATCC 35110 / GB-78).